The primary structure comprises 311 residues: tRNA-cytidine(32) 2-sulfurtransferase (311 aa).

Residues 47-52 (SGGKDS) carry the PP-loop motif motif. Cys122, Cys125, and Cys213 together coordinate [4Fe-4S] cluster.

It belongs to the TtcA family. Homodimer. The cofactor is Mg(2+). [4Fe-4S] cluster is required as a cofactor.

It localises to the cytoplasm. It carries out the reaction cytidine(32) in tRNA + S-sulfanyl-L-cysteinyl-[cysteine desulfurase] + AH2 + ATP = 2-thiocytidine(32) in tRNA + L-cysteinyl-[cysteine desulfurase] + A + AMP + diphosphate + H(+). It participates in tRNA modification. Catalyzes the ATP-dependent 2-thiolation of cytidine in position 32 of tRNA, to form 2-thiocytidine (s(2)C32). The sulfur atoms are provided by the cysteine/cysteine desulfurase (IscS) system. This Shigella flexneri serotype 5b (strain 8401) protein is tRNA-cytidine(32) 2-sulfurtransferase.